We begin with the raw amino-acid sequence, 197 residues long: Holliday junction branch migration complex subunit RuvA (197 aa).

The domain I stretch occupies residues 1–64; it reads MIGRLRGIVA…EDSVSLYGFL (64 aa). Positions 65–143 are domain II; it reads REGERRLFRD…QFGAGGALPT (79 aa). Residues 144 to 153 form a flexible linker region; that stretch reads GSGPAPADPL. Residues 153-197 form a domain III region; sequence LSDATVALQQLGYKPAEAARMARDAFNEGDEVATVIRKALQSALR.

The protein belongs to the RuvA family. Homotetramer. Forms an RuvA(8)-RuvB(12)-Holliday junction (HJ) complex. HJ DNA is sandwiched between 2 RuvA tetramers; dsDNA enters through RuvA and exits via RuvB. An RuvB hexamer assembles on each DNA strand where it exits the tetramer. Each RuvB hexamer is contacted by two RuvA subunits (via domain III) on 2 adjacent RuvB subunits; this complex drives branch migration. In the full resolvosome a probable DNA-RuvA(4)-RuvB(12)-RuvC(2) complex forms which resolves the HJ.

Its subcellular location is the cytoplasm. The RuvA-RuvB-RuvC complex processes Holliday junction (HJ) DNA during genetic recombination and DNA repair, while the RuvA-RuvB complex plays an important role in the rescue of blocked DNA replication forks via replication fork reversal (RFR). RuvA specifically binds to HJ cruciform DNA, conferring on it an open structure. The RuvB hexamer acts as an ATP-dependent pump, pulling dsDNA into and through the RuvAB complex. HJ branch migration allows RuvC to scan DNA until it finds its consensus sequence, where it cleaves and resolves the cruciform DNA. This Stenotrophomonas maltophilia (strain K279a) protein is Holliday junction branch migration complex subunit RuvA.